Consider the following 462-residue polypeptide: U2 small nuclear ribonucleoprotein auxiliary factor 35 kDa subunit-related protein 2 (462 aa).

Positions 1–13 are enriched in low complexity; the sequence is METAGATADATAG. Disordered stretches follow at residues 1–22, 44–66, and 115–138; these read META…RKKY, AELA…EEER, and WEEQ…EREE. Residue lysine 49 forms a Glycyl lysine isopeptide (Lys-Gly) (interchain with G-Cter in SUMO2) linkage. Over residues 57-66 the composition is skewed to basic and acidic residues; the sequence is AEEKRLEEER. The C3H1-type 1 zinc finger occupies 170–198; sequence EKDRANCPFYSKTGACRFGDRCSRKHNFP. One can recognise an RRM domain in the interval 202–308; sequence PTLLIKGMFT…RQLQCEFCPV (107 aa). Residues 310-337 form a C3H1-type 2 zinc finger; that stretch reads RWKMAICGLFEVQQCPRGKHCNFLHVFR. Position 353 is a phosphoserine (serine 353). Residues 354 to 462 form a disordered region; that stretch reads PDWTSSSFGK…QPQPQPQSDP (109 aa). Over residues 364-379 the composition is skewed to basic and acidic residues; the sequence is NSERRERASHYDEYYG. Serine 389 bears the Phosphoserine mark. The span at 392–403 shows a compositional bias: basic and acidic residues; sequence FYKRNGESDRKS. Basic residues predominate over residues 404–417; it reads SSRHRVKKSHRYGM.

Component of the U11/U12 snRNPs that are part of the U12-type spliceosome. Interacts (via RS domain) with SRSF1 and SRSF2. Interacts with U2AF2/U2AF65. Phosphorylated in the RS domain by SRPK1.

Its subcellular location is the nucleus. Functionally, pre-mRNA-binding protein required for splicing of both U2- and U12-type introns. Selectively interacts with the 3'-splice site of U2- and U12-type pre-mRNAs and promotes different steps in U2 and U12 intron splicing. Recruited to U12 pre-mRNAs in an ATP-dependent manner and is required for assembly of the prespliceosome, a precursor to other spliceosomal complexes. For U2-type introns, it is selectively and specifically required for the second step of splicing. This Mus musculus (Mouse) protein is U2 small nuclear ribonucleoprotein auxiliary factor 35 kDa subunit-related protein 2 (Zrsr2).